A 507-amino-acid polypeptide reads, in one-letter code: Maturase K (507 aa).

The protein belongs to the intron maturase 2 family. MatK subfamily.

The protein resides in the plastid. It is found in the chloroplast. Its function is as follows. Usually encoded in the trnK tRNA gene intron. Probably assists in splicing its own and other chloroplast group II introns. This Cryptomeria japonica (Japanese cedar) protein is Maturase K.